A 557-amino-acid polypeptide reads, in one-letter code: Dicarboxylate transporter 1, chloroplastic (557 aa).

The N-terminal 69 residues, 1-69 (MASLALSGSC…STLVKASSTV (69 aa)), are a transit peptide targeting the chloroplast. A run of 12 helical transmembrane segments spans residues 90–110 (AAIK…FVPV), 122–142 (LAIF…LGAV), 158–178 (FAAA…LAFF), 229–249 (AGGI…SNVG), 256–276 (LGSW…SMFL), 305–325 (AAIV…YLIY), 355–375 (IMAA…KLGV), 376–396 (DAVT…VVTW), 411–431 (WFAA…IEWF), 438–458 (FVGG…LLYF), 477–497 (AFLS…LVLA), and 531–551 (YGFL…GAWW).

The protein belongs to the SLC13A/DASS transporter (TC 2.A.47) family. DIT1 subfamily. Expressed in roots, rosette and cauline leaves, stems, flowers and siliques.

The protein localises to the plastid. It is found in the chloroplast inner membrane. 2-oxoglutarate/malate translocator involved with DIT2-1 in primary ammonia assimilation and in the re-assimilation of ammonia generated by the photorespiratory pathway. Imports 2-oxoglutarate into plastids as precursor for ammonia assimilation. 2-oxoglutarate is converted to glutamate, the end product of ammonia assimilation, which is exported to the cytosol by DIT2-1. The protein is Dicarboxylate transporter 1, chloroplastic (DIT1) of Arabidopsis thaliana (Mouse-ear cress).